The primary structure comprises 417 residues: MLKREMNIADYDAELWQAMEQEKVRQEEHIELIASENYTSPRVMQAQGSQLTNKYAEGYPGKRYYGGCEYVDVVEQLAIDRAKELFGADYANVQPHSGSQANFAVYTALLQPGDTVLGMNLAQGGHLTHGSPVNFSGKLYNIIPYGIDESGKIDYDDMAKQAQEHKPKMIIGGFSAYSGIVDWAKMREIADSIGAYLFVDMAHVAGLIAAGVYPNPVPHAHVVTTTTHKTLAGPRGGLILAKGGSEELYKKLNSAVFPSAQGGPLMHVIAAKAVALKEAMEPEFKVYQQQVAKNAKAMVEVFLNRGYKVVSGGTENHLFLLDLVDKNLTGKEADAALGRANITVNKNSVPNDPKSPFVTSGIRIGSPAVTRRGFKEAEVKELAGWMCDVLDNINDDAVIERVKGKVLDICARFPVYA.

Residues Leu-121 and 125 to 127 (GHL) each bind (6S)-5,6,7,8-tetrahydrofolate. Lys-229 carries the N6-(pyridoxal phosphate)lysine modification. 355–357 (SPF) contacts (6S)-5,6,7,8-tetrahydrofolate.

It belongs to the SHMT family. As to quaternary structure, homodimer. Requires pyridoxal 5'-phosphate as cofactor.

The protein localises to the cytoplasm. The enzyme catalyses (6R)-5,10-methylene-5,6,7,8-tetrahydrofolate + glycine + H2O = (6S)-5,6,7,8-tetrahydrofolate + L-serine. It functions in the pathway one-carbon metabolism; tetrahydrofolate interconversion. The protein operates within amino-acid biosynthesis; glycine biosynthesis; glycine from L-serine: step 1/1. Functionally, catalyzes the reversible interconversion of serine and glycine with tetrahydrofolate (THF) serving as the one-carbon carrier. This reaction serves as the major source of one-carbon groups required for the biosynthesis of purines, thymidylate, methionine, and other important biomolecules. Also exhibits THF-independent aldolase activity toward beta-hydroxyamino acids, producing glycine and aldehydes, via a retro-aldol mechanism. The polypeptide is Serine hydroxymethyltransferase (Klebsiella pneumoniae subsp. pneumoniae (strain ATCC 700721 / MGH 78578)).